The following is a 156-amino-acid chain: Transcriptional repressor NrdR (156 aa).

A zinc finger lies at 3–34 (CPKCSSTHSRVVDSRHADDANAIRRRRECENC). In terms of domain architecture, ATP-cone spans 49–139 (LIVVKKDGTR…VYKEFKDVDQ (91 aa)).

Belongs to the NrdR family. Zn(2+) is required as a cofactor.

In terms of biological role, negatively regulates transcription of bacterial ribonucleotide reductase nrd genes and operons by binding to NrdR-boxes. The protein is Transcriptional repressor NrdR of Staphylococcus haemolyticus (strain JCSC1435).